A 543-amino-acid polypeptide reads, in one-letter code: Heparanase-like protein 1 (543 aa).

Positions 1–24 (MGFRVCVIVVFLGCLLLVPEKTMA) are cleaved as a signal peptide. A glycan (N-linked (GlcNAc...) asparagine) is linked at asparagine 184. Catalysis depends on glutamate 201, which acts as the Proton donor. N-linked (GlcNAc...) asparagine glycosylation is present at asparagine 304. Glutamate 320 functions as the Nucleophile in the catalytic mechanism. Residues asparagine 425 and asparagine 428 are each glycosylated (N-linked (GlcNAc...) asparagine).

It belongs to the glycosyl hydrolase 79 family.

The protein resides in the lysosome membrane. Its subcellular location is the secreted. In terms of biological role, endoglycosidase which is a cell surface and extracellular matrix-degrading enzyme. Cleaves heparan sulfate proteoglycans (HSPGs) into heparan sulfate side chains and core proteoglycans. This chain is Heparanase-like protein 1, found in Arabidopsis thaliana (Mouse-ear cress).